The primary structure comprises 144 residues: MAPKKKKVTGLIKLQIQAGQANPAPPVGPALGAHGVNIMEFCKAYNAATENQRGNVVPVEITVYEDRSFDFKLKTPPAAKLLLKAAGLQKGSGVPHTNKVGKVTMDQIREIAETKKEDLNARDIDAAAKIIAGTARSMGITVEG.

It belongs to the universal ribosomal protein uL11 family. As to quaternary structure, part of the ribosomal stalk of the 50S ribosomal subunit. Interacts with L10 and the large rRNA to form the base of the stalk. L10 forms an elongated spine to which L12 dimers bind in a sequential fashion forming a multimeric L10(L12)X complex. One or more lysine residues are methylated.

In terms of biological role, forms part of the ribosomal stalk which helps the ribosome interact with GTP-bound translation factors. The polypeptide is Large ribosomal subunit protein uL11 (Corynebacterium efficiens (strain DSM 44549 / YS-314 / AJ 12310 / JCM 11189 / NBRC 100395)).